The following is a 461-amino-acid chain: Hydroxyproline dehydrogenase (461 aa).

Lys310 is modified (N6-acetyllysine).

Belongs to the proline oxidase family. It depends on FAD as a cofactor.

It catalyses the reaction trans-4-hydroxy-L-proline + a quinone = (3R,5S)-1-pyrroline-3-hydroxy-5-carboxylate + a quinol + H(+). The enzyme catalyses L-proline + a quinone = (S)-1-pyrroline-5-carboxylate + a quinol + H(+). The protein operates within amino-acid degradation; L-proline degradation into L-glutamate; L-glutamate from L-proline: step 1/2. Dehydrogenase that converts trans-4-L-hydroxyproline to delta-1-pyrroline-3-hydroxy-5-carboxylate (Hyp) using ubiquinone-10 as the terminal electron acceptor. Can also use proline as a substrate but with a very much lower efficiency. Does not react with other diastereomers of Hyp: trans-4-D-hydroxyproline and cis-4-L-hydroxyproline. Ubiquininone analogs such as menadione, duroquinone and ubiquinone-1 react more efficiently than oxygen as the terminal electron acceptor during catalysis. This chain is Hydroxyproline dehydrogenase, found in Bos taurus (Bovine).